The chain runs to 288 residues: GDSL esterase/lipase At3g43550 (288 aa).

The first 19 residues, 1–19, serve as a signal peptide directing secretion; it reads MKLQIIWLALVLIAVETYA. N-linked (GlcNAc...) asparagine glycosylation occurs at Asn25. The active-site Nucleophile is Ser37.

Belongs to the 'GDSL' lipolytic enzyme family.

The protein localises to the secreted. The chain is GDSL esterase/lipase At3g43550 from Arabidopsis thaliana (Mouse-ear cress).